A 441-amino-acid polypeptide reads, in one-letter code: Ubiquitin carboxyl-terminal hydrolase MINDY-3 (441 aa).

Cys51 acts as the Nucleophile in catalysis. His284 serves as the catalytic Proton acceptor.

This sequence belongs to the MINDY deubiquitinase family. FAM188 subfamily.

Its subcellular location is the nucleus. It catalyses the reaction Thiol-dependent hydrolysis of ester, thioester, amide, peptide and isopeptide bonds formed by the C-terminal Gly of ubiquitin (a 76-residue protein attached to proteins as an intracellular targeting signal).. In terms of biological role, hydrolase that can remove 'Lys-48'-linked conjugated ubiquitin from proteins. The chain is Ubiquitin carboxyl-terminal hydrolase MINDY-3 (mindy3) from Xenopus tropicalis (Western clawed frog).